We begin with the raw amino-acid sequence, 390 residues long: Dual-specificity RNA methyltransferase RlmN (390 aa).

The active-site Proton acceptor is the glutamate 126. The region spanning 134–374 (TEDRGAVCLS…APVRTPRGQD (241 aa)) is the Radical SAM core domain. Cysteine 141 and cysteine 379 form a disulfide bridge. Positions 148, 152, and 155 each coordinate [4Fe-4S] cluster. Residues 205–206 (GE), serine 237, 259–261 (SLH), and asparagine 336 contribute to the S-adenosyl-L-methionine site. Cysteine 379 acts as the S-methylcysteine intermediate in catalysis.

This sequence belongs to the radical SAM superfamily. RlmN family. It depends on [4Fe-4S] cluster as a cofactor.

The protein localises to the cytoplasm. It carries out the reaction adenosine(2503) in 23S rRNA + 2 reduced [2Fe-2S]-[ferredoxin] + 2 S-adenosyl-L-methionine = 2-methyladenosine(2503) in 23S rRNA + 5'-deoxyadenosine + L-methionine + 2 oxidized [2Fe-2S]-[ferredoxin] + S-adenosyl-L-homocysteine. The enzyme catalyses adenosine(37) in tRNA + 2 reduced [2Fe-2S]-[ferredoxin] + 2 S-adenosyl-L-methionine = 2-methyladenosine(37) in tRNA + 5'-deoxyadenosine + L-methionine + 2 oxidized [2Fe-2S]-[ferredoxin] + S-adenosyl-L-homocysteine. Functionally, specifically methylates position 2 of adenine 2503 in 23S rRNA and position 2 of adenine 37 in tRNAs. m2A2503 modification seems to play a crucial role in the proofreading step occurring at the peptidyl transferase center and thus would serve to optimize ribosomal fidelity. This Acidiphilium cryptum (strain JF-5) protein is Dual-specificity RNA methyltransferase RlmN.